A 222-amino-acid polypeptide reads, in one-letter code: Pyridoxal phosphate homeostasis protein (222 aa).

N6-(pyridoxal phosphate)lysine is present on Lys35.

Belongs to the pyridoxal phosphate-binding protein YggS/PROSC family.

Pyridoxal 5'-phosphate (PLP)-binding protein, which is involved in PLP homeostasis. The sequence is that of Pyridoxal phosphate homeostasis protein from Helicobacter pylori (strain ATCC 700392 / 26695) (Campylobacter pylori).